A 509-amino-acid chain; its full sequence is Proline-rich receptor-like protein kinase PERK15 (509 aa).

The interval 1–44 is disordered; that stretch reads MSTDTIPSLSSPPAPEFPSTTPDTATSPAPSQPSIIGPSSLAPF. The Extracellular segment spans residues 1–61; sequence MSTDTIPSLS…DGGSRNVALT (61 aa). Residues 18–34 are compositionally biased toward low complexity; it reads PSTTPDTATSPAPSQPS. A helical membrane pass occupies residues 62–82; that stretch reads GLITGVVLGATFVLLGVCIFV. The Cytoplasmic segment spans residues 83-509; it reads CFYKRKKRKL…IEPEKNTKDT (427 aa). Threonine 132 is subject to Phosphothreonine. The region spanning 143 to 423 is the Protein kinase domain; it reads FSNTNLLGQG…VRAFEGNISI (281 aa). ATP-binding positions include 149–157 and lysine 171; that span reads LGQGGFGYV. Tyrosine 216 carries the phosphotyrosine modification. The Proton acceptor role is filled by aspartate 267. Serine 300 carries the post-translational modification Phosphoserine. Phosphothreonine is present on residues threonine 301 and threonine 306. At tyrosine 314 the chain carries Phosphotyrosine. The span at 468 to 499 shows a compositional bias: polar residues; it reads FGSSECSGLTSDNGQNPSGSSSITEGQRTTQE. Residues 468-509 form a disordered region; sequence FGSSECSGLTSDNGQNPSGSSSITEGQRTTQEIEPEKNTKDT.

It belongs to the protein kinase superfamily. Ser/Thr protein kinase family. Mostly expressed in inflorescence bolts, and, to a lower extent, in flower buds and siliques.

Its subcellular location is the cell membrane. It carries out the reaction L-seryl-[protein] + ATP = O-phospho-L-seryl-[protein] + ADP + H(+). It catalyses the reaction L-threonyl-[protein] + ATP = O-phospho-L-threonyl-[protein] + ADP + H(+). The polypeptide is Proline-rich receptor-like protein kinase PERK15 (PERK15) (Arabidopsis thaliana (Mouse-ear cress)).